The primary structure comprises 218 residues: Ras-related protein Rab-11B (218 aa).

G2 is subject to N-acetylglycine. R4 is modified (citrulline). GTP is bound by residues S20, G21, G23, K24, S25, N26, N37, L38, S40, S42, and T43. Residue S25 coordinates Mg(2+). The Switch 1 motif lies at 36–47; that stretch reads FNLESKSTIGVE. Positions 43 and 66 each coordinate Mg(2+). The short motif at 67–86 is the Switch 2 element; it reads TAGQERYRAITSAYYRGAVG. GTP-binding residues include G69, N124, K125, D127, A155, and L156. Positions 184-218 are disordered; the sequence is RAAHDESPGNNVVDISVPPTTDGQKPNKLQCCQNL. 2 S-geranylgeranyl cysteine lipidation sites follow: C214 and C215. Cysteine methyl ester is present on C215. A propeptide spans 216–218 (removed in mature form); the sequence is QNL.

It belongs to the small GTPase superfamily. Rab family. Interacts with KCNMA1. Interacts with RAB11FIP1, RAB11FIP2, RAB11FIP3 and RAB11FIP4. May interact with TBC1D14. Interacts with ATP6V1E1. Interacts with PI4KB. Interacts (GDP-bound form) with ZFYVE27. Interacts (GDP-bound form) with KIF5A in a ZFYVE27-dependent manner. Interacts with RELCH. Interacts (in GTP-bound form) with TBC1D8B (via domain Rab-GAP TBC). Forms a complex containing RAB11B, ASAP1, Rabin8/RAB3IP, RAP11FIP3 and ARF4. Interacts with WDR44. Mg(2+) is required as a cofactor. In terms of processing, citrullinated by PADI4. Post-translationally, (Microbial infection) Glycosylated on arginine residues by S.typhimurium protein Ssek3.

Its subcellular location is the recycling endosome membrane. It is found in the cytoplasmic vesicle. The protein resides in the secretory vesicle. It localises to the synaptic vesicle membrane. The protein localises to the phagosome membrane. The enzyme catalyses GTP + H2O = GDP + phosphate + H(+). Its activity is regulated as follows. Regulated by guanine nucleotide exchange factors (GEFs) which promote the exchange of bound GDP for free GTP. Regulated by GTPase activating proteins (GAPs) which increase the GTP hydrolysis activity. Inhibited by GDP dissociation inhibitors (GDIs) which prevent Rab-GDP dissociation. Functionally, the small GTPases Rab are key regulators of intracellular membrane trafficking, from the formation of transport vesicles to their fusion with membranes. Rabs cycle between an inactive GDP-bound form and an active GTP-bound form that is able to recruit to membranes different set of downstream effectors directly responsible for vesicle formation, movement, tethering and fusion. The small Rab GTPase RAB11B plays a role in endocytic recycling, regulating apical recycling of several transmembrane proteins including cystic fibrosis transmembrane conductance regulator/CFTR, epithelial sodium channel/ENaC, potassium voltage-gated channel, and voltage-dependent L-type calcium channel. May also regulate constitutive and regulated secretion, like insulin granule exocytosis. Required for melanosome transport and release from melanocytes. Also regulates V-ATPase intracellular transport in response to extracellular acidosis. Promotes Rabin8/RAB3IP preciliary vesicular trafficking to mother centriole by forming a ciliary targeting complex containing Rab11, ASAP1, Rabin8/RAB3IP, RAB11FIP3 and ARF4, thereby regulating ciliogenesis initiation. On the contrary, upon LPAR1 receptor signaling pathway activation, interaction with phosphorylated WDR44 prevents Rab11-RAB3IP-RAB11FIP3 complex formation and cilia growth. The protein is Ras-related protein Rab-11B of Homo sapiens (Human).